The chain runs to 454 residues: OTU domain-containing protein 1 (454 aa).

Disordered stretches follow at residues Gln36 to Ala64 and Leu116 to Asp257. A compositionally biased stretch (low complexity) spans Arg52–Ala64. Positions Leu116–Pro125 are enriched in pro residues. 3 stretches are compositionally biased toward basic and acidic residues: residues Asp151–Gln164, Gly193–Gly210, and Ala219–Ala229. Positions Lys282–His411 constitute an OTU domain. Residues Ile287–Cys293 are cys-loop. Asp290 is a catalytic residue. Catalysis depends on Cys293, which acts as the Nucleophile. Positions Ala342–Pro352 are his-loop. Residues Trp399–His404 are variable-loop. The active site involves His404. A UIM domain is found at Lys430–Glu449.

The enzyme catalyses Thiol-dependent hydrolysis of ester, thioester, amide, peptide and isopeptide bonds formed by the C-terminal Gly of ubiquitin (a 76-residue protein attached to proteins as an intracellular targeting signal).. Functionally, deubiquitinating enzyme that specifically hydrolyzes 'Lys-63'-linked polyubiquitin to monoubiquitin. Required for the stability and translation of a subset mRNAs with a high abundance of rare codons by mediating deubiquitination of 40S ribosomal protein RPS10/eS10, thereby antagonizing ZNF598-mediated 40S ubiquitination. The abundance of rare codons in mRNAs can limit the translation rate and can lead to ribosome collisions that trigger activation of ribosome quality control (RQC) pathway by ZNF598. OTUD1-mediated deubiquitination prevents activation of the RQC and subsequent dissociation of ribosomes and stimulates formation of polysomes and translation. This is OTU domain-containing protein 1 (Otud1) from Mus musculus (Mouse).